A 341-amino-acid polypeptide reads, in one-letter code: Small ribosomal subunit protein uS3 (341 aa).

One can recognise a KH type-2 domain in the interval 38-106 (IRRMMTRGME…QVQLNILEVK (69 aa)). Disordered stretches follow at residues 224 to 246 (RAVR…LETA) and 274 to 341 (PAGQ…TKEG). Low complexity-rich tracts occupy residues 285–303 (AEQP…VTGE) and 311–333 (AAPA…DAPS).

Belongs to the universal ribosomal protein uS3 family. In terms of assembly, part of the 30S ribosomal subunit. Forms a tight complex with proteins S10 and S14.

Binds the lower part of the 30S subunit head. Binds mRNA in the 70S ribosome, positioning it for translation. The polypeptide is Small ribosomal subunit protein uS3 (Acidothermus cellulolyticus (strain ATCC 43068 / DSM 8971 / 11B)).